Reading from the N-terminus, the 193-residue chain is Holliday junction branch migration complex subunit RuvA (193 aa).

Residues 1-63 (MIAHIQGKLV…EDSHSLYGFA (63 aa)) form a domain I region. The tract at residues 64 to 142 (EKSEKEIFKL…KLYDLDQVSI (79 aa)) is domain II. The tract at residues 143 to 145 (SQS) is flexible linker. Residues 145 to 193 (SNTNKDEALSALEVLGFIRKSAEKVVEKIVATMPDATVETIIKQALKNL) are domain III.

Belongs to the RuvA family. Homotetramer. Forms an RuvA(8)-RuvB(12)-Holliday junction (HJ) complex. HJ DNA is sandwiched between 2 RuvA tetramers; dsDNA enters through RuvA and exits via RuvB. An RuvB hexamer assembles on each DNA strand where it exits the tetramer. Each RuvB hexamer is contacted by two RuvA subunits (via domain III) on 2 adjacent RuvB subunits; this complex drives branch migration. In the full resolvosome a probable DNA-RuvA(4)-RuvB(12)-RuvC(2) complex forms which resolves the HJ.

The protein localises to the cytoplasm. The RuvA-RuvB-RuvC complex processes Holliday junction (HJ) DNA during genetic recombination and DNA repair, while the RuvA-RuvB complex plays an important role in the rescue of blocked DNA replication forks via replication fork reversal (RFR). RuvA specifically binds to HJ cruciform DNA, conferring on it an open structure. The RuvB hexamer acts as an ATP-dependent pump, pulling dsDNA into and through the RuvAB complex. HJ branch migration allows RuvC to scan DNA until it finds its consensus sequence, where it cleaves and resolves the cruciform DNA. The polypeptide is Holliday junction branch migration complex subunit RuvA (Flavobacterium psychrophilum (strain ATCC 49511 / DSM 21280 / CIP 103535 / JIP02/86)).